The chain runs to 202 residues: Protein TIFY 11g (202 aa).

The span at 1 to 11 (MDAVGAAGGGA) shows a compositional bias: gly residues. Residues 1–31 (MDAVGAAGGGAMLPAAARRGQPPQPPCMTTA) form a disordered region. The segment covering 12–21 (MLPAAARRGQ) has biased composition (low complexity). A Tify domain is found at 101–136 (ATAPTAPLTIVYGGQVLVFEHYTAEAAEKLVQRTQH). A Jas motif is present at residues 185–200 (PIARKASLQRFLQKRK). The Nuclear localization signal signature appears at 187 to 194 (ARKASLQR).

This sequence belongs to the TIFY/JAZ family. Ubiquitinated. Targeted for degradation by the SCF(COI1) E3 ubiquitin ligase-proteasome pathway during jasmonate signaling.

Its subcellular location is the nucleus. In terms of biological role, repressor of jasmonate responses. The sequence is that of Protein TIFY 11g from Oryza sativa subsp. japonica (Rice).